Consider the following 159-residue polypeptide: Protein Smg homolog (159 aa).

Belongs to the Smg family.

In Vibrio parahaemolyticus serotype O3:K6 (strain RIMD 2210633), this protein is Protein Smg homolog.